The chain runs to 289 residues: MEPAAGIQRRSSQGPTVPPPPRGHAPPAAAPGPAPLSSPVREPPQLEEERQVRISESGQFSDGLEDRGLLESSTRLKPHEAQNYRKKALWVSWFSIIVTLALAVAAFTVSVMRYSASAFGFAFDAILDVLSSAIVLWRYSNAAAVHSAHREYIACVILGVIFLLSSICIVVKAIHDLSTRLLPEVDDFLFSVSILSGILCSILAVLKFMLGKVLTSRALITDGFNSLVGGVMGFSILLSAEVFKHDSAVWYLDGSIGVLIGLTIFAYGVKLLIDMVPRVRQTRHYEMFE.

A disordered region spans residues 1-65 (MEPAAGIQRR…ESGQFSDGLE (65 aa)). Residues 1–88 (MEPAAGIQRR…HEAQNYRKKA (88 aa)) lie on the Cytoplasmic side of the membrane. Serine 11 is subject to Phosphoserine. Positions 16–36 (TVPPPPRGHAPPAAAPGPAPL) are enriched in pro residues. The interval 42–72 (EPPQLEEERQVRISESGQFSDGLEDRGLLES) is required for interaction with MCOLN1. Phosphoserine is present on residues serine 55, serine 57, and serine 61. The chain crosses the membrane as a helical span at residues 89–109 (LWVSWFSIIVTLALAVAAFTV). Residues 110-116 (SVMRYSA) are Extracellular-facing. A helical membrane pass occupies residues 117–137 (SAFGFAFDAILDVLSSAIVLW). Topologically, residues 138-150 (RYSNAAAVHSAHR) are cytoplasmic. The chain crosses the membrane as a helical span at residues 151 to 171 (EYIACVILGVIFLLSSICIVV). The Extracellular segment spans residues 172-187 (KAIHDLSTRLLPEVDD). A helical membrane pass occupies residues 188 to 208 (FLFSVSILSGILCSILAVLKF). Topologically, residues 209–217 (MLGKVLTSR) are cytoplasmic. A helical membrane pass occupies residues 218 to 238 (ALITDGFNSLVGGVMGFSILL). The Extracellular segment spans residues 239-255 (SAEVFKHDSAVWYLDGS). A helical membrane pass occupies residues 256-276 (IGVLIGLTIFAYGVKLLIDMV). The Cytoplasmic portion of the chain corresponds to 277-289 (PRVRQTRHYEMFE).

The protein belongs to the TMEM163 family. In terms of assembly, homodimer. Interacts with MCOLN1/TRPML1. Interacts with SLC30A1, SLC30A2, SLC30A3 and SLC30A4. Widely expressed. High expression is detected in brain, lung and testis.

It localises to the cytoplasmic vesicle. It is found in the secretory vesicle. The protein localises to the synaptic vesicle membrane. The protein resides in the early endosome membrane. Its subcellular location is the late endosome membrane. It localises to the lysosome membrane. It is found in the cell membrane. It carries out the reaction Zn(2+)(in) = Zn(2+)(out). Its function is as follows. Zinc ion transporter that mediates zinc efflux and plays a crucial role in intracellular zinc homeostasis. Binds the divalent cations Zn(2+), Ni(2+), and to a minor extent Cu(2+). Is a functional modulator of P2X purinoceptors, including P2RX1, P2RX3, P2RX4 and P2RX7. Plays a role in central nervous system development and is required for myelination, and survival and proliferation of oligodendrocytes. The sequence is that of Transmembrane protein 163 (TMEM163) from Homo sapiens (Human).